We begin with the raw amino-acid sequence, 334 residues long: Holliday junction branch migration complex subunit RuvB (334 aa).

Residues 4 to 184 (ADRIISPNAT…FGIVQRLEFY (181 aa)) are large ATPase domain (RuvB-L). ATP is bound by residues isoleucine 23, arginine 24, glycine 65, lysine 68, threonine 69, threonine 70, 131–133 (EDY), arginine 174, tyrosine 184, and arginine 221. Mg(2+) is bound at residue threonine 69. The segment at 185–255 (SVEDLRHIVA…VADKALNMLN (71 aa)) is small ATPAse domain (RuvB-S). Residues 258-334 (LHGFDHMDRR…YNHFGLTMPE (77 aa)) are head domain (RuvB-H). The DNA site is built by arginine 313 and arginine 318.

Belongs to the RuvB family. Homohexamer. Forms an RuvA(8)-RuvB(12)-Holliday junction (HJ) complex. HJ DNA is sandwiched between 2 RuvA tetramers; dsDNA enters through RuvA and exits via RuvB. An RuvB hexamer assembles on each DNA strand where it exits the tetramer. Each RuvB hexamer is contacted by two RuvA subunits (via domain III) on 2 adjacent RuvB subunits; this complex drives branch migration. In the full resolvosome a probable DNA-RuvA(4)-RuvB(12)-RuvC(2) complex forms which resolves the HJ.

It localises to the cytoplasm. The catalysed reaction is ATP + H2O = ADP + phosphate + H(+). Functionally, the RuvA-RuvB-RuvC complex processes Holliday junction (HJ) DNA during genetic recombination and DNA repair, while the RuvA-RuvB complex plays an important role in the rescue of blocked DNA replication forks via replication fork reversal (RFR). RuvA specifically binds to HJ cruciform DNA, conferring on it an open structure. The RuvB hexamer acts as an ATP-dependent pump, pulling dsDNA into and through the RuvAB complex. RuvB forms 2 homohexamers on either side of HJ DNA bound by 1 or 2 RuvA tetramers; 4 subunits per hexamer contact DNA at a time. Coordinated motions by a converter formed by DNA-disengaged RuvB subunits stimulates ATP hydrolysis and nucleotide exchange. Immobilization of the converter enables RuvB to convert the ATP-contained energy into a lever motion, pulling 2 nucleotides of DNA out of the RuvA tetramer per ATP hydrolyzed, thus driving DNA branch migration. The RuvB motors rotate together with the DNA substrate, which together with the progressing nucleotide cycle form the mechanistic basis for DNA recombination by continuous HJ branch migration. Branch migration allows RuvC to scan DNA until it finds its consensus sequence, where it cleaves and resolves cruciform DNA. This is Holliday junction branch migration complex subunit RuvB from Hahella chejuensis (strain KCTC 2396).